Reading from the N-terminus, the 444-residue chain is MNPREFISNLPDEILGKILSLLPTKLGVSTSVLSKRWRNLILLVDNFDLEDSSTSGFSAFLEQTVARLNTCPIKRLSLNGRHYRFSSADSWISTAFERGCLELHLQSQYLDTGILSSNTLVKLTLSDQIYLQGLVPHDGTVFFPALKTLSLGAVVADRDVYESLISGCPVLDELSIRDGCDDPPTWKKSVVNKSVKRLTVSFHHPMSAWAYEDNVWFKTQSLVFLDYSAFVSQGYTIVDRMDSLVEARLDLRLWVSTDSYDSDYEDKDFDVYRPYDVFGDVTSLVSGIRKVKTLHLSPDSLEAFFFCCNHMPVFNNLRNLSLESDEEKGWQALPLLLNNSLNLHTLSIKGLVHRVTSRCGDACACISERKTGMCCLSACRIKVLEITGYGGSFIELKQMRHFLGKLQCLETVRIGVERDGNNEHLRANLSSLHRASSECNIQFI.

One can recognise an F-box domain in the interval 4 to 50 (REFISNLPDEILGKILSLLPTKLGVSTSVLSKRWRNLILLVDNFDLE).

In Arabidopsis thaliana (Mouse-ear cress), this protein is Putative F-box protein At1g64540.